A 528-amino-acid polypeptide reads, in one-letter code: MDAKALWQRYQEWLYFHEGLGLYLDVSRMRFDDAFVKSLLPKFDKAFADMAELEKGAIANPDENRMVGHYWLRNPDLAPTPEIAQEIVQTLEQIEAFAEKIQTGAIHPPKANRFTDIISIGIGGSALGPQFVAEALAPEFPPLKIHFIDNTDPAGIDRILTHLRNHLASTLVLVISKSGGTPEPRNGMIEVKKAYAGQNLDFAQYAVAITSTGSNLDKVAQSEGWLATFPMYDWVGGRTSEMSSVGLVPAALQGIDVRAMLEGAKEMDDATRVPEVKNNPAALLALSWYYSGNGKGEKDMVVLPYKDSLLLFSRYLQQLVMESLGKEKDLDGNTVYQGIAVYGNKGSTDQHAYVQQLREGVPNFFATLIEVLEDRHGASPEIDPGVTSGDYLSGFLLGTRQALYENQRDSITVTIPQVNARTVGALVALYERTVGLYASLVNINAYHQPGVEAGKKAAAVILDLQTKVVGLLQKEKTALSLEQIAEKIGAADQVEAIYKILRHLQANQRGVVFQGNLGQPSSLKISLS.

The Proton donor role is filled by glutamate 322. Active-site residues include histidine 351 and lysine 455.

Belongs to the GPI family.

It localises to the cytoplasm. The catalysed reaction is alpha-D-glucose 6-phosphate = beta-D-fructose 6-phosphate. Its pathway is carbohydrate biosynthesis; gluconeogenesis. It participates in carbohydrate degradation; glycolysis; D-glyceraldehyde 3-phosphate and glycerone phosphate from D-glucose: step 2/4. In terms of biological role, catalyzes the reversible isomerization of glucose-6-phosphate to fructose-6-phosphate. The polypeptide is Glucose-6-phosphate isomerase (Nostoc sp. (strain PCC 7120 / SAG 25.82 / UTEX 2576)).